The primary structure comprises 842 residues: Oleate activated transcription factor 3 (842 aa).

Residues 22-50 (CTNCKRRKSKCDRQNPCSNCVRFGNKDTC) constitute a DNA-binding region (zn(2)-C6 fungal-type). Positions 55-101 (NPKNTESQHGEDTDNKVKKQQPQMIKGKRNGTSSSIVGSKASSISPT) are disordered. A compositionally biased stretch (basic and acidic residues) spans 60 to 71 (ESQHGEDTDNKV). Low complexity predominate over residues 87–99 (SSSIVGSKASSIS).

This sequence belongs to the OAF3 family.

It localises to the cytoplasm. The protein localises to the nucleus. It is found in the mitochondrion. Functionally, transcriptional inhibitor with a significantly increased number of target genes in response to oleate. The chain is Oleate activated transcription factor 3 (OAF3) from Zygosaccharomyces rouxii (strain ATCC 2623 / CBS 732 / NBRC 1130 / NCYC 568 / NRRL Y-229).